A 140-amino-acid chain; its full sequence is MRHGKAGRKLNRTASHRKAMFANMAASLITHEQIVTTLPKAKEIRPIVEKLVTLGKRGDLHARRQAISQIRDAAVVSKLFDTIATRYATRNGGYLRIMKAGFRQGDNAAMAVIEFVDRDAYAKGAADKARVAAEEQAVAA.

This sequence belongs to the bacterial ribosomal protein bL17 family. In terms of assembly, part of the 50S ribosomal subunit. Contacts protein L32.

This chain is Large ribosomal subunit protein bL17, found in Rhizobium johnstonii (strain DSM 114642 / LMG 32736 / 3841) (Rhizobium leguminosarum bv. viciae).